Reading from the N-terminus, the 485-residue chain is Ribulose bisphosphate carboxylase large chain (485 aa).

Residues 1-2 (MS) constitute a propeptide that is removed on maturation. Pro-3 is subject to N-acetylproline. Lys-14 is modified (N6,N6,N6-trimethyllysine). Substrate-binding residues include Asn-123 and Thr-173. The active-site Proton acceptor is the Lys-175. Lys-177 contacts substrate. Mg(2+) contacts are provided by Lys-201, Asp-203, and Glu-204. Lys-201 carries the N6-carboxylysine modification. Catalysis depends on His-294, which acts as the Proton acceptor. Residues Arg-295, His-327, and Ser-379 each coordinate substrate.

It belongs to the RuBisCO large chain family. Type I subfamily. As to quaternary structure, heterohexadecamer of 8 large chains and 8 small chains; disulfide-linked. The disulfide link is formed within the large subunit homodimers. Mg(2+) serves as cofactor. In terms of processing, the disulfide bond which can form in the large chain dimeric partners within the hexadecamer appears to be associated with oxidative stress and protein turnover.

Its subcellular location is the plastid. The protein localises to the chloroplast. It carries out the reaction 2 (2R)-3-phosphoglycerate + 2 H(+) = D-ribulose 1,5-bisphosphate + CO2 + H2O. The enzyme catalyses D-ribulose 1,5-bisphosphate + O2 = 2-phosphoglycolate + (2R)-3-phosphoglycerate + 2 H(+). Its function is as follows. RuBisCO catalyzes two reactions: the carboxylation of D-ribulose 1,5-bisphosphate, the primary event in carbon dioxide fixation, as well as the oxidative fragmentation of the pentose substrate in the photorespiration process. Both reactions occur simultaneously and in competition at the same active site. This Flaveria pringlei protein is Ribulose bisphosphate carboxylase large chain.